Reading from the N-terminus, the 310-residue chain is Tagatose-6-phosphate kinase (310 aa).

This sequence belongs to the carbohydrate kinase PfkB family. LacC subfamily.

The enzyme catalyses D-tagatofuranose 6-phosphate + ATP = D-tagatofuranose 1,6-bisphosphate + ADP + H(+). It participates in carbohydrate metabolism; D-tagatose 6-phosphate degradation; D-glyceraldehyde 3-phosphate and glycerone phosphate from D-tagatose 6-phosphate: step 1/2. The sequence is that of Tagatose-6-phosphate kinase from Streptococcus mutans serotype c (strain ATCC 700610 / UA159).